The sequence spans 556 residues: Glutamine--tRNA ligase (556 aa).

The 'HIGH' region motif lies at 33-43 (PEPNGYLHIGH). ATP-binding positions include 34 to 36 (EPN) and 40 to 46 (HIGHAKS). The L-glutamine site is built by aspartate 66 and tyrosine 210. ATP is bound by residues threonine 229, 259 to 260 (RL), and 267 to 269 (MSK). Positions 266-270 (VMSKR) match the 'KMSKS' region motif.

The protein belongs to the class-I aminoacyl-tRNA synthetase family. In terms of assembly, monomer.

Its subcellular location is the cytoplasm. It carries out the reaction tRNA(Gln) + L-glutamine + ATP = L-glutaminyl-tRNA(Gln) + AMP + diphosphate. The chain is Glutamine--tRNA ligase from Clostridium kluyveri (strain ATCC 8527 / DSM 555 / NBRC 12016 / NCIMB 10680 / K1).